We begin with the raw amino-acid sequence, 65 residues long: Large ribosomal subunit protein bL35 (65 aa).

This sequence belongs to the bacterial ribosomal protein bL35 family.

The sequence is that of Large ribosomal subunit protein bL35 from Thermotoga neapolitana (strain ATCC 49049 / DSM 4359 / NBRC 107923 / NS-E).